The sequence spans 179 residues: Translationally-controlled tumor protein homolog (179 aa).

The 179-residue stretch at 1 to 179 (MIIYKDIISG…WKHGLEEMKV (179 aa)) folds into the TCTP domain.

It belongs to the TCTP family.

It is found in the cytoplasm. The protein localises to the cytoskeleton. Functionally, involved in protein synthesis. Involved in microtubule stabilization. This chain is Translationally-controlled tumor protein homolog, found in Aspergillus fumigatus (strain ATCC MYA-4609 / CBS 101355 / FGSC A1100 / Af293) (Neosartorya fumigata).